A 140-amino-acid polypeptide reads, in one-letter code: Holo-[acyl-carrier-protein] synthase (140 aa).

Mg(2+)-binding residues include D8 and E57.

It belongs to the P-Pant transferase superfamily. AcpS family. Mg(2+) is required as a cofactor.

Its subcellular location is the cytoplasm. The enzyme catalyses apo-[ACP] + CoA = holo-[ACP] + adenosine 3',5'-bisphosphate + H(+). In terms of biological role, transfers the 4'-phosphopantetheine moiety from coenzyme A to a Ser of acyl-carrier-protein. This Beijerinckia indica subsp. indica (strain ATCC 9039 / DSM 1715 / NCIMB 8712) protein is Holo-[acyl-carrier-protein] synthase.